A 28-amino-acid chain; its full sequence is Dermaseptin-1 (28 aa).

Gln28 carries the post-translational modification Glutamine amide.

Expressed by the skin glands.

Its subcellular location is the secreted. Its function is as follows. Has antimicrobial activity. This Phyllomedusa tomopterna (Tiger-striped leaf frog) protein is Dermaseptin-1.